The chain runs to 70 residues: Gas vesicle protein A (70 aa).

Belongs to the gas vesicle GvpA family. The gas vesicle shell is 2 nm thick and consists of a single layer of this protein. It forms helical ribs nearly perpendicular to the long axis of the vesicle.

Its subcellular location is the gas vesicle shell. Its function is as follows. Gas vesicles are hollow, gas filled proteinaceous nanostructures found in some microorganisms. During planktonic growth they allow positioning of the organism at a favorable depth for light or nutrient acquisition. GvpA forms the protein shell. This Bradyrhizobium sp. (strain ORS 278) protein is Gas vesicle protein A.